The primary structure comprises 74 residues: Large ribosomal subunit protein bL31 (74 aa).

Zn(2+)-binding residues include Cys16, Cys18, Cys38, and Cys41.

Belongs to the bacterial ribosomal protein bL31 family. Type A subfamily. In terms of assembly, part of the 50S ribosomal subunit. Zn(2+) serves as cofactor.

Binds the 23S rRNA. In Salinispora tropica (strain ATCC BAA-916 / DSM 44818 / JCM 13857 / NBRC 105044 / CNB-440), this protein is Large ribosomal subunit protein bL31.